An 85-amino-acid polypeptide reads, in one-letter code: Large ribosomal subunit protein bL27 (85 aa).

Residues 1 to 22 (MAHKKAGGSTRNGRDSESKRLG) form a disordered region.

The protein belongs to the bacterial ribosomal protein bL27 family.

The polypeptide is Large ribosomal subunit protein bL27 (Marinomonas sp. (strain MWYL1)).